The primary structure comprises 271 residues: Formamidopyrimidine-DNA glycosylase (271 aa).

Pro-2 serves as the catalytic Schiff-base intermediate with DNA. Glu-3 functions as the Proton donor in the catalytic mechanism. Lys-57 serves as the catalytic Proton donor; for beta-elimination activity. The DNA site is built by His-90, Arg-109, and Lys-151. The FPG-type zinc finger occupies His-236–Thr-270. The active-site Proton donor; for delta-elimination activity is Arg-260.

Belongs to the FPG family. In terms of assembly, monomer. Requires Zn(2+) as cofactor.

The catalysed reaction is Hydrolysis of DNA containing ring-opened 7-methylguanine residues, releasing 2,6-diamino-4-hydroxy-5-(N-methyl)formamidopyrimidine.. It catalyses the reaction 2'-deoxyribonucleotide-(2'-deoxyribose 5'-phosphate)-2'-deoxyribonucleotide-DNA = a 3'-end 2'-deoxyribonucleotide-(2,3-dehydro-2,3-deoxyribose 5'-phosphate)-DNA + a 5'-end 5'-phospho-2'-deoxyribonucleoside-DNA + H(+). Functionally, involved in base excision repair of DNA damaged by oxidation or by mutagenic agents. Acts as a DNA glycosylase that recognizes and removes damaged bases. Has a preference for oxidized purines, such as 7,8-dihydro-8-oxoguanine (8-oxoG). Has AP (apurinic/apyrimidinic) lyase activity and introduces nicks in the DNA strand. Cleaves the DNA backbone by beta-delta elimination to generate a single-strand break at the site of the removed base with both 3'- and 5'-phosphates. The polypeptide is Formamidopyrimidine-DNA glycosylase (Shewanella denitrificans (strain OS217 / ATCC BAA-1090 / DSM 15013)).